The sequence spans 154 residues: MTLALVFVSNESNFTVNTVFASGLASSSAPLPASPVELGTLPAPAPAAPAMNPPIGMEISGMFNTVFSSLIKLEVSKRVNCEMSCTILEILGSTGLTSSLCDGAVVVVELKRVVIVIGEISAGVTRVFIQIEEDLFASIRKDILGAYLIDCVCC.

This is an uncharacterized protein from Saccharomyces cerevisiae (strain ATCC 204508 / S288c) (Baker's yeast).